A 257-amino-acid chain; its full sequence is Snake venom serine protease nikobin (257 aa).

An N-terminal signal peptide occupies residues Met-1–Ala-18. The propeptide occupies Gln-19–Leu-24. Positions Val-25–Ala-248 constitute a Peptidase S1 domain. 6 disulfide bridges follow: Cys-31–Cys-162, Cys-49–Cys-65, Cys-97–Cys-255, Cys-141–Cys-209, Cys-173–Cys-188, and Cys-199–Cys-224. Residues His-64 and Asp-109 each act as charge relay system in the active site. N-linked (GlcNAc...) asparagine glycosylation is found at Asn-120 and Asn-121. Ser-203 serves as the catalytic Charge relay system. Asn-250 is a glycosylation site (N-linked (GlcNAc...) asparagine).

The protein belongs to the peptidase S1 family. Snake venom subfamily. Monomer. Expressed by the venom gland.

It localises to the secreted. Functionally, snake venom serine protease that may act in the hemostasis system of the prey. In Vipera nikolskii (Nikolsky's adder), this protein is Snake venom serine protease nikobin (sp-VN).